Here is a 548-residue protein sequence, read N- to C-terminus: Chaperonin GroEL (548 aa).

Residues 29–32 (TLGP), lysine 50, 86–90 (DGTTT), glycine 414, 478–480 (NAA), and aspartate 494 contribute to the ATP site.

Belongs to the chaperonin (HSP60) family. In terms of assembly, forms a cylinder of 14 subunits composed of two heptameric rings stacked back-to-back. Interacts with the co-chaperonin GroES.

It localises to the cytoplasm. The enzyme catalyses ATP + H2O + a folded polypeptide = ADP + phosphate + an unfolded polypeptide.. Together with its co-chaperonin GroES, plays an essential role in assisting protein folding. The GroEL-GroES system forms a nano-cage that allows encapsulation of the non-native substrate proteins and provides a physical environment optimized to promote and accelerate protein folding. The polypeptide is Chaperonin GroEL (Psychrobacter sp. (strain PRwf-1)).